Reading from the N-terminus, the 501-residue chain is Splicing factor ESS-2 homolog (501 aa).

Low complexity-rich tracts occupy residues 1–18 (MSAT…GTPG) and 105–115 (ISGTGRSTSRR). 2 disordered regions span residues 1–20 (MSAT…PGSL) and 105–163 (ISGT…GRDT). Over residues 126–151 (TPVSQAKCSNTPLPNSRATDTPFSTD) the composition is skewed to polar residues. A compositionally biased stretch (basic and acidic residues) spans 152-163 (GSEKSDAEGRDT). Phosphoserine is present on residues Ser409 and Ser411. Positions 425 to 471 (RGTPRLRHTPSPMSGRKRKVTPGVVRSTNTPILGEPKPKQQAKISTP) are disordered.

It belongs to the ESS2 family.

It localises to the nucleus. This is Splicing factor ESS-2 homolog (Es2) from Drosophila melanogaster (Fruit fly).